The following is a 222-amino-acid chain: Probable nicotinate-nucleotide adenylyltransferase (222 aa).

This sequence belongs to the NadD family.

It catalyses the reaction nicotinate beta-D-ribonucleotide + ATP + H(+) = deamido-NAD(+) + diphosphate. Its pathway is cofactor biosynthesis; NAD(+) biosynthesis; deamido-NAD(+) from nicotinate D-ribonucleotide: step 1/1. Its function is as follows. Catalyzes the reversible adenylation of nicotinate mononucleotide (NaMN) to nicotinic acid adenine dinucleotide (NaAD). The chain is Probable nicotinate-nucleotide adenylyltransferase from Pseudomonas syringae pv. tomato (strain ATCC BAA-871 / DC3000).